Here is a 96-residue protein sequence, read N- to C-terminus: Small ribosomal subunit protein bS16 (96 aa).

The protein belongs to the bacterial ribosomal protein bS16 family.

The chain is Small ribosomal subunit protein bS16 from Vesicomyosocius okutanii subsp. Calyptogena okutanii (strain HA).